The primary structure comprises 111 residues: Cornifelin (111 aa).

The protein belongs to the cornifelin family. In terms of assembly, directly or indirectly cross-linked to CE proteins loricin and involucrin (IVL).

Its subcellular location is the cytoplasm. Its function is as follows. Part of the insoluble cornified cell envelope (CE) of stratified squamous epithelia. The polypeptide is Cornifelin (Cnfn) (Mus musculus (Mouse)).